A 282-amino-acid polypeptide reads, in one-letter code: MGVPLILRKTDFFANAGQAVAVADRYPQNVFAEHTHEFCELVLVWRGNGLHVLNDRPYRITRGDLFYIRAEDKHSYASVNDLVLQNVIYCPDRLKLNVDWASNIPGFNDARGAPHWRLSSNGMGQVRPVITQLEQESLKADQSANEMAELLFAQLVMTLKRFRYATDNPSANEQEALLDKLITALAGSLNRSFVLEKFCEQEQCSERALRQQFRTQTGMTVNHYLRQLRICHAQYLLQHTELMVSEVAMRCGFEDSNYFSVVFNREVGMTPVQWRHRSRKAA.

One can recognise an HTH araC/xylS-type domain in the interval 179–277 (DKLITALAGS…GMTPVQWRHR (99 aa)). 2 DNA-binding regions (H-T-H motif) span residues 196 to 217 (EKFC…RTQT) and 244 to 267 (VSEV…NREV).

In terms of assembly, binds DNA as a dimer.

The protein localises to the cytoplasm. Activates expression of the rhaSR operon in response to L-rhamnose. This Enterobacter sp. (strain 638) protein is HTH-type transcriptional activator RhaR.